The following is a 473-amino-acid chain: Tubulin gamma chain (473 aa).

Residues 33–56 (TDGLSQLPDSSTERDDDTKPFFRE) are disordered. Positions 43–56 (STERDDDTKPFFRE) are enriched in basic and acidic residues. GTP is bound at residue 143 to 149 (AGGTGSG).

The protein belongs to the tubulin family. In terms of assembly, interacts with SPC72, SPC97 and SPC98.

The protein localises to the cytoplasm. It localises to the cytoskeleton. It is found in the microtubule organizing center. Its subcellular location is the spindle pole body. Its function is as follows. Tubulin is the major constituent of microtubules. The gamma chain is found at microtubule organizing centers (MTOC) such as the spindle poles or the centrosome, suggesting that it is involved in the minus-end nucleation of microtubule assembly. TUB4 is an important spindle pole body component that organizes both cytoplasmic and nuclear microtubule arrays. This chain is Tubulin gamma chain (TUB4), found in Saccharomyces cerevisiae (strain ATCC 204508 / S288c) (Baker's yeast).